The primary structure comprises 497 residues: Probable cytosol aminopeptidase (497 aa).

Residues lysine 267 and aspartate 272 each contribute to the Mn(2+) site. Residue lysine 279 is part of the active site. Mn(2+) is bound by residues aspartate 290, aspartate 349, and glutamate 351. Arginine 353 is a catalytic residue.

Belongs to the peptidase M17 family. Mn(2+) is required as a cofactor.

The protein resides in the cytoplasm. It catalyses the reaction Release of an N-terminal amino acid, Xaa-|-Yaa-, in which Xaa is preferably Leu, but may be other amino acids including Pro although not Arg or Lys, and Yaa may be Pro. Amino acid amides and methyl esters are also readily hydrolyzed, but rates on arylamides are exceedingly low.. It carries out the reaction Release of an N-terminal amino acid, preferentially leucine, but not glutamic or aspartic acids.. In terms of biological role, presumably involved in the processing and regular turnover of intracellular proteins. Catalyzes the removal of unsubstituted N-terminal amino acids from various peptides. The polypeptide is Probable cytosol aminopeptidase (Pseudomonas putida (strain W619)).